The following is a 467-amino-acid chain: Cytochrome P450 85A3 (467 aa).

The chain crosses the membrane as a helical span at residues 2–22 (AIFLIIFVVFFGFCILSTPLF). Cys-417 contacts heme.

It belongs to the cytochrome P450 family. It depends on heme as a cofactor. As to expression, expressed in fruits.

It is found in the membrane. It catalyses the reaction 6-deoxocastasterone + reduced [NADPH--hemoprotein reductase] + O2 = 6alpha-hydroxycastasterone + oxidized [NADPH--hemoprotein reductase] + H2O + H(+). The catalysed reaction is 6alpha-hydroxycastasterone + reduced [NADPH--hemoprotein reductase] + O2 = castasterone + oxidized [NADPH--hemoprotein reductase] + 2 H2O + H(+). It carries out the reaction castasterone + reduced [NADPH--hemoprotein reductase] + O2 = brassinolide + oxidized [NADPH--hemoprotein reductase] + H2O + H(+). The enzyme catalyses 6-deoxocastasterone + 2 reduced [NADPH--hemoprotein reductase] + 2 O2 = castasterone + 2 oxidized [NADPH--hemoprotein reductase] + 3 H2O + 2 H(+). It participates in plant hormone biosynthesis; brassinosteroid biosynthesis. In terms of biological role, catalyzes the C6-oxidation step in brassinosteroids biosynthesis. Converts 6-deoxocastasterone (6-deoxoCS) to castasterone (CS), and castasterone (CS) to brassinolide (BL). The chain is Cytochrome P450 85A3 from Solanum lycopersicum (Tomato).